The sequence spans 603 residues: ATP-dependent zinc metalloprotease FtsH (603 aa).

Residues 1–2 lie on the Stromal side of the membrane; sequence MK. A helical transmembrane segment spans residues 3–23; sequence NLWIWSLPLIVLAFIGWQELA. At 24–101 the chain is on the lumenal side; sequence NQMPVATSRM…DVDVHAVSNW (78 aa). Residues 102 to 122 traverse the membrane as a helical segment; sequence INVASNWIIPLIIIGVVIWLL. Residues 123–603 are Stromal-facing; the sequence is SRSASSNTTG…SQAARLTAVN (481 aa). 194-201 contributes to the ATP binding site; the sequence is GPPGTGKT. H415 contributes to the Zn(2+) binding site. E416 is an active-site residue. 2 residues coordinate Zn(2+): H419 and D493.

This sequence in the central section; belongs to the AAA ATPase family. In the C-terminal section; belongs to the peptidase M41 family. As to quaternary structure, homohexamer. Requires Zn(2+) as cofactor.

It is found in the plastid. It localises to the chloroplast thylakoid membrane. Functionally, acts as a processive, ATP-dependent zinc metallopeptidase. The polypeptide is ATP-dependent zinc metalloprotease FtsH (Cyanidioschyzon merolae (strain NIES-3377 / 10D) (Unicellular red alga)).